The primary structure comprises 297 residues: Ribosomal RNA small subunit methyltransferase H (297 aa).

S-adenosyl-L-methionine is bound by residues 36-38 (GGH), D56, L90, D104, and H111.

It belongs to the methyltransferase superfamily. RsmH family.

The protein resides in the cytoplasm. It catalyses the reaction cytidine(1402) in 16S rRNA + S-adenosyl-L-methionine = N(4)-methylcytidine(1402) in 16S rRNA + S-adenosyl-L-homocysteine + H(+). Specifically methylates the N4 position of cytidine in position 1402 (C1402) of 16S rRNA. The chain is Ribosomal RNA small subunit methyltransferase H from Dictyoglomus thermophilum (strain ATCC 35947 / DSM 3960 / H-6-12).